The following is a 295-amino-acid chain: Nucleotide-binding protein LSL_1171 (295 aa).

13 to 20 contributes to the ATP binding site; it reads GMSGAGKT. 63–66 contacts GTP; that stretch reads DLRS.

Belongs to the RapZ-like family.

Its function is as follows. Displays ATPase and GTPase activities. This Ligilactobacillus salivarius (strain UCC118) (Lactobacillus salivarius) protein is Nucleotide-binding protein LSL_1171.